Reading from the N-terminus, the 504-residue chain is Glucose-6-phosphate isomerase (504 aa).

Glu333 serves as the catalytic Proton donor. Catalysis depends on residues His364 and Lys473.

The protein belongs to the GPI family.

The protein resides in the cytoplasm. The enzyme catalyses alpha-D-glucose 6-phosphate = beta-D-fructose 6-phosphate. It functions in the pathway carbohydrate biosynthesis; gluconeogenesis. It participates in carbohydrate degradation; glycolysis; D-glyceraldehyde 3-phosphate and glycerone phosphate from D-glucose: step 2/4. Its function is as follows. Catalyzes the reversible isomerization of glucose-6-phosphate to fructose-6-phosphate. The sequence is that of Glucose-6-phosphate isomerase from Xanthomonas campestris pv. campestris (strain B100).